A 382-amino-acid chain; its full sequence is Galactokinase (382 aa).

Position 34–37 (34–37 (EHTD)) interacts with substrate. Residue 124–130 (GAGLSSS) participates in ATP binding. Mg(2+) contacts are provided by Ser-130 and Glu-162. Asp-174 serves as the catalytic Proton acceptor. Residue Tyr-223 participates in substrate binding.

The protein belongs to the GHMP kinase family. GalK subfamily.

The protein resides in the cytoplasm. It carries out the reaction alpha-D-galactose + ATP = alpha-D-galactose 1-phosphate + ADP + H(+). It functions in the pathway carbohydrate metabolism; galactose metabolism. Functionally, catalyzes the transfer of the gamma-phosphate of ATP to D-galactose to form alpha-D-galactose-1-phosphate (Gal-1-P). This chain is Galactokinase, found in Salmonella paratyphi C (strain RKS4594).